Consider the following 484-residue polypeptide: MYKGWDSEALSIQSEIVNEILLYCYLTPQPPIPSETTTATSPTNIENEISNLESSENLEELKRLSVALNIDRRCNICSIVNLCLKQNKSWIYDYSLLCYKCNYAPKTPLSLLIVSAEFIMLIRERFPNINFDGLFQNNIVSIFDFHVHFFIHRCFANTVNDHIQSENITLNHMAIIRSTLLKEDSIPHIKIKKFLTKKMNPKKTQSPELNKKLTVPMKTRFTTLLFYMWSGTNVFDRVPFTDLTIRKHRFIKNLYSNKTDIELTAGPILLAQIPFSITKNKTTSVCLLCELMAASKQDYLFLKYLHQSIMDYCQNNLKMIDRVQFVIADIFEKTKIHMHVKNLSDYSKAIFDNEFSFSDDNFTLDTHVYLILRQTGTVGVYKHFFCDPLCLANCKTINPEVLFNTTDAGEIQDLKVTICYRNEYLSIVEKHVWLAIHLFKAFQIIKPNHKNKTQIAEFLKDFTNLLALHHFDIVDPIFTVNYYV.

8 residues coordinate Zn(2+): C74, C77, H148, C154, C286, C289, H383, and C390. Zinc finger regions lie at residues 74–154 (CNIC…IHRC) and 286–390 (CLLC…DPLC).

The protein belongs to the herpesviridae UL32 protein family.

The protein localises to the host cytoplasm. Its subcellular location is the host nucleus. Plays a role in efficient localization of neo-synthesized capsids to nuclear replication compartments, thereby controlling cleavage and packaging of virus genomic DNA. The protein is Packaging protein UL32 homolog (U36) of Homo sapiens (Human).